A 189-amino-acid chain; its full sequence is Interferon alpha-1/13 (189 aa).

A signal peptide spans 1-23 (MASPFALLMVLVVLSCKSSCSLG). Intrachain disulfides connect Cys24/Cys122 and Cys52/Cys162.

It belongs to the alpha/beta interferon family. As to quaternary structure, interacts with CR2.

Its subcellular location is the secreted. Functionally, produced by macrophages, IFN-alpha have antiviral activities. Interferon stimulates the production of two enzymes: a protein kinase and an oligoadenylate synthetase. This is Interferon alpha-1/13 (IFNA1) from Homo sapiens (Human).